The chain runs to 288 residues: ATP synthase subunit a (288 aa).

6 helical membrane-spanning segments follow: residues 47–67 (LDSM…FWMV), 104–124 (LIAP…LMDL), 157–177 (DPNI…FYSI), 199–219 (PIVQ…TLIA), 237–257 (LIFI…SVPW), and 258–278 (AIFH…LTIV).

This sequence belongs to the ATPase A chain family. As to quaternary structure, F-type ATPases have 2 components, CF(1) - the catalytic core - and CF(0) - the membrane proton channel. CF(1) has five subunits: alpha(3), beta(3), gamma(1), delta(1), epsilon(1). CF(0) has three main subunits: a(1), b(2) and c(9-12). The alpha and beta chains form an alternating ring which encloses part of the gamma chain. CF(1) is attached to CF(0) by a central stalk formed by the gamma and epsilon chains, while a peripheral stalk is formed by the delta and b chains.

Its subcellular location is the cell inner membrane. In terms of biological role, key component of the proton channel; it plays a direct role in the translocation of protons across the membrane. In Psychrobacter arcticus (strain DSM 17307 / VKM B-2377 / 273-4), this protein is ATP synthase subunit a.